We begin with the raw amino-acid sequence, 2752 residues long: Protein PFF0380w (2752 aa).

The segment covering 20–30 has biased composition (basic and acidic residues); that stretch reads EREKEEEEKKR. 5 disordered regions span residues 20–44, 139–160, 634–678, 1048–1130, and 1153–1172; these read EREK…NNYN, HIHK…NNDY, NDIV…INMK, DKKS…SGEN, and ENLQ…NNNG. A compositionally biased stretch (low complexity) spans 32–44; it reads YNISNNNNNNNYN. The span at 142-157 shows a compositional bias: basic and acidic residues; the sequence is KNNDINNIHEKNDKSN. Low complexity predominate over residues 640–674; sequence NNNNNNNNNNNNNNNNNNNNNNNNNNNNNNNNNNN. Positions 1048-1060 are enriched in basic and acidic residues; sequence DKKSEDMKEDTPT. Polar residues predominate over residues 1061 to 1075; that stretch reads RGENLQRGQNLQRGD. The segment covering 1076 to 1090 has biased composition (basic and acidic residues); the sequence is NLQRGDNLQRGDNLQ. The segment covering 1091-1130 has biased composition (polar residues); that stretch reads RGDNLQNGDNLQNGDNLQRGDNLQNGENLQSGENLQSGEN. Over residues 1162–1172 the composition is skewed to low complexity; it reads NNILYPYNNNG. The 78-residue stretch at 1277-1354 folds into the HTH OST-type domain; that stretch reads TLEEVLEIIS…LHRTHIQHKK (78 aa). 4 disordered regions span residues 1457–1499, 1958–1999, 2063–2099, and 2501–2537; these read DIKQ…NNIS, AKNS…YYML, KRKN…NNDK, and DENN…FLHN. Composition is skewed to low complexity over residues 1469–1499 and 1962–1975; these read NNIN…NNIS and NQEN…NYNN. The span at 1976-1994 shows a compositional bias: acidic residues; that stretch reads NDDDDDNNNNNNDDDDDDN. 2 stretches are compositionally biased toward low complexity: residues 2068–2095 and 2501–2526; these read NIHN…NNDN and DENN…VLHN.

This Plasmodium falciparum (isolate 3D7) protein is Protein PFF0380w.